Reading from the N-terminus, the 209-residue chain is GTP cyclohydrolase 1 (209 aa).

Positions 100, 103, and 171 each coordinate Zn(2+).

Belongs to the GTP cyclohydrolase I family. In terms of assembly, toroid-shaped homodecamer, composed of two pentamers of five dimers.

The enzyme catalyses GTP + H2O = 7,8-dihydroneopterin 3'-triphosphate + formate + H(+). Its pathway is cofactor biosynthesis; 7,8-dihydroneopterin triphosphate biosynthesis; 7,8-dihydroneopterin triphosphate from GTP: step 1/1. The protein is GTP cyclohydrolase 1 of Ralstonia nicotianae (strain ATCC BAA-1114 / GMI1000) (Ralstonia solanacearum).